Consider the following 324-residue polypeptide: DNA repair and recombination protein RadA (324 aa).

114 to 121 (GEFGSGKT) is an ATP binding site.

The protein belongs to the eukaryotic RecA-like protein family.

Its function is as follows. Involved in DNA repair and in homologous recombination. Binds and assemble on single-stranded DNA to form a nucleoprotein filament. Hydrolyzes ATP in a ssDNA-dependent manner and promotes DNA strand exchange between homologous DNA molecules. The protein is DNA repair and recombination protein RadA of Metallosphaera sedula (strain ATCC 51363 / DSM 5348 / JCM 9185 / NBRC 15509 / TH2).